The primary structure comprises 703 residues: Elongation factor G 1 (703 aa).

One can recognise a tr-type G domain in the interval 8-290; the sequence is ERYRNIGISA…AVIDFLPSPV (283 aa). Residues 17-24, 88-92, and 142-145 contribute to the GTP site; these read AHIDAGKT, DTPGH, and NKMD.

It belongs to the TRAFAC class translation factor GTPase superfamily. Classic translation factor GTPase family. EF-G/EF-2 subfamily.

The protein localises to the cytoplasm. In terms of biological role, catalyzes the GTP-dependent ribosomal translocation step during translation elongation. During this step, the ribosome changes from the pre-translocational (PRE) to the post-translocational (POST) state as the newly formed A-site-bound peptidyl-tRNA and P-site-bound deacylated tRNA move to the P and E sites, respectively. Catalyzes the coordinated movement of the two tRNA molecules, the mRNA and conformational changes in the ribosome. The protein is Elongation factor G 1 of Ralstonia nicotianae (strain ATCC BAA-1114 / GMI1000) (Ralstonia solanacearum).